The following is a 304-amino-acid chain: tRNA dimethylallyltransferase (304 aa).

An ATP-binding site is contributed by 13-20 (GPTAAGKT). Position 15–20 (15–20 (TAAGKT)) interacts with substrate. Residues 38–41 (DSRQ) form an interaction with substrate tRNA region.

Belongs to the IPP transferase family. As to quaternary structure, monomer. Mg(2+) serves as cofactor.

The catalysed reaction is adenosine(37) in tRNA + dimethylallyl diphosphate = N(6)-dimethylallyladenosine(37) in tRNA + diphosphate. Catalyzes the transfer of a dimethylallyl group onto the adenine at position 37 in tRNAs that read codons beginning with uridine, leading to the formation of N6-(dimethylallyl)adenosine (i(6)A). This is tRNA dimethylallyltransferase from Cytophaga hutchinsonii (strain ATCC 33406 / DSM 1761 / CIP 103989 / NBRC 15051 / NCIMB 9469 / D465).